An 878-amino-acid polypeptide reads, in one-letter code: Splicing factor 3B subunit 2 (878 aa).

The segment covering 1–10 has biased composition (basic and acidic residues); sequence MAAEHPEPPK. Disordered stretches follow at residues 1–25 and 67–136; these read MAAE…GHYG and RPVL…LRVG. Lys-10 is covalently cross-linked (Glycyl lysine isopeptide (Lys-Gly) (interchain with G-Cter in SUMO2)). In terms of domain architecture, SAP spans 24 to 58; that stretch reads YGAWAAQELQARLAEIGAPIQGSREELVERLQTYT. Composition is skewed to pro residues over residues 91 to 114 and 122 to 133; these read PMPP…PPPG and AHPPNLGPPPPL. Positions 140 to 177 form a coiled coil; it reads ALSEEERLKLAQQQAALLMQQEERAKQAAVLMEQERQQ. 2 disordered regions span residues 183–356 and 383–436; these read GTAV…EYVT and KKEK…SKKK. Residues 201–221 show a composition bias toward low complexity; that stretch reads PLGPRVAAPVGPVVPTPTVLP. 3 positions are modified to omega-N-methylarginine: Arg-205, Arg-228, and Arg-230. Over residues 224 to 237 the composition is skewed to pro residues; that stretch reads APVPRPRGPPPPPG. At Lys-258 the chain carries N6-acetyllysine. Basic and acidic residues predominate over residues 260-269; sequence LQLKESRQEE. Lys-263 participates in a covalent cross-link: Glycyl lysine isopeptide (Lys-Gly) (interchain with G-Cter in SUMO2). Phosphoserine is present on Ser-272. A Phosphothreonine modification is found at Thr-281. Ser-290 and Ser-292 each carry phosphoserine. Residue Thr-294 is modified to Phosphothreonine. A Phosphoserine modification is found at Ser-300. A compositionally biased stretch (basic residues) spans 305 to 321; it reads EKNRKRRNRKKKKKPQR. Basic and acidic residues predominate over residues 330–342; it reads SGDREKDSGRSRG. Ser-343 bears the Phosphoserine mark. Glycyl lysine isopeptide (Lys-Gly) (interchain with G-Cter in SUMO2) cross-links involve residues Lys-383 and Lys-395. Basic and acidic residues-rich tracts occupy residues 383-397 and 405-414; these read KKEK…DKME and KGFEEEHKDS. Positions 384 to 533 are required for interaction with PRMT9; the sequence is KEKEKEPEKL…QEKEEQKTMK (150 aa). Phosphoserine is present on residues Ser-414, Ser-418, and Ser-419. Residue Lys-475 forms a Glycyl lysine isopeptide (Lys-Gly) (interchain with G-Cter in SUMO2) linkage. 2 positions are modified to omega-N-methylarginine: Arg-491 and Arg-498. Arg-491 carries the symmetric dimethylarginine modification. Lys-526 participates in a covalent cross-link: Glycyl lysine isopeptide (Lys-Gly) (interchain with G-Cter in SUMO2). Residues 674-740 form a disordered region; the sequence is AAEFQTKTEE…PGGFSSVPAG (67 aa). Acidic residues predominate over residues 695 to 715; the sequence is EPSDEESSEEEEEEESDEDKP. Lys-753 participates in a covalent cross-link: Glycyl lysine isopeptide (Lys-Gly) (interchain with G-Cter in SUMO2). Thr-763 carries the post-translational modification Phosphothreonine. Glycyl lysine isopeptide (Lys-Gly) (interchain with G-Cter in SUMO2) cross-links involve residues Lys-773, Lys-826, and Lys-840. Residues 827–852 show a composition bias toward basic and acidic residues; it reads YEEHVREQQAQVEKEDFSDMVAEHAA. Residues 827–878 are disordered; that stretch reads YEEHVREQQAQVEKEDFSDMVAEHAAKQKQKKRKAQPQDSRGGSKKYKEFKF. At Ser-844 the chain carries Phosphoserine.

In terms of assembly, component of the 17S U2 SnRNP complex, a ribonucleoprotein complex that contains small nuclear RNA (snRNA) U2 and a number of specific proteins. Part of the SF3B subcomplex of the 17S U2 SnRNP complex. SF3B associates with the splicing subcomplex SF3A and a 12S RNA unit to form the U2 small nuclear ribonucleoproteins complex (U2 snRNP). Within the SF3B complex, interacts directly with SF3B4. Found in a complex with PRMT9, SF3B2 and SF3B4. Interacts (Arg-491-methylated form) with SMN1 (via Tudor domain). Interacts with RBM7. Interacts with ERCC6. Component of the minor spliceosome. Within this complex, interacts with SCNM1 and CRIPT. Post-translationally, methylation at Arg-491 by PRMT9 is required for the interaction with SMN1.

It is found in the nucleus. The protein localises to the nucleus speckle. Functionally, component of the 17S U2 SnRNP complex of the spliceosome, a large ribonucleoprotein complex that removes introns from transcribed pre-mRNAs. The 17S U2 SnRNP complex (1) directly participates in early spliceosome assembly and (2) mediates recognition of the intron branch site during pre-mRNA splicing by promoting the selection of the pre-mRNA branch-site adenosine, the nucleophile for the first step of splicing. Within the 17S U2 SnRNP complex, SF3B2 is part of the SF3B subcomplex, which is required for 'A' complex assembly formed by the stable binding of U2 snRNP to the branchpoint sequence in pre-mRNA. Sequence independent binding of SF3A and SF3B subcomplexes upstream of the branch site is essential, it may anchor U2 snRNP to the pre-mRNA. May also be involved in the assembly of the 'E' complex. Also acts as a component of the minor spliceosome, which is involved in the splicing of U12-type introns in pre-mRNAs. This is Splicing factor 3B subunit 2 from Mus musculus (Mouse).